The following is a 138-amino-acid chain: Large ribosomal subunit protein uL16 (138 aa).

Residues Met1–Gln13 are compositionally biased toward basic residues. The segment at Met1–Gly24 is disordered.

This sequence belongs to the universal ribosomal protein uL16 family. As to quaternary structure, part of the 50S ribosomal subunit.

Binds 23S rRNA and is also seen to make contacts with the A and possibly P site tRNAs. The polypeptide is Large ribosomal subunit protein uL16 (Burkholderia ambifaria (strain ATCC BAA-244 / DSM 16087 / CCUG 44356 / LMG 19182 / AMMD) (Burkholderia cepacia (strain AMMD))).